The primary structure comprises 240 residues: MNPPQARVSEQTKDLLSVMVNQHPEEDAKVCKSSDNSPLYNTMVMLSYGGDTDLLLSSACTRTSTVNRSAFTQHSVFYIISTVLIQPICCIFFFFYYKATRCMLLFTAGLLLTILHHFRLIIMLLCVYRNIRSDLLPLSTSQQLLLGIIVVTRTMLFCITAYYTLFIDTRVFFLITGHLQSEVIFPDSVSKILPVSWGPSPAVLLVMAAVIYAMDCLVDTVSFIGPRVWVRVMLKTSISF.

Helical transmembrane passes span Val-76–Tyr-96, Leu-104–Leu-124, Gly-147–Ile-167, and Val-203–Gly-225.

It belongs to the alphaherpesvirinae UL20 family. In terms of assembly, interacts with gK (via N-terminus); this interaction plays a role in the coordinate transport of UL20 and gK to the trans-Golgi network (TGN), and is required for their cell surface expression. Interacts with gB. Interacts with host STING1; this interaction inhibits host interferon-beta promoter activation.

It localises to the virion. It is found in the host cell membrane. The protein resides in the host endosome membrane. The protein localises to the host Golgi apparatus membrane. Its subcellular location is the host nucleus membrane. In terms of biological role, plays an essential role in egress of virus particles from the nucleus, cytoplasmic envelopment and virus-induced cell fusion. Forms a functional protein complex with gK and this interaction is absolutely essential for their coordinate intracellular transport, gK glycosylation, expression on host cell surface, and function. Together, they modulate gB-mediated virus-induced cell fusion and virion egress and therefore actively participate in these processes. In addition, plays a role in inhibiting the type I interferon responses by suppressing STING1-mediated activation of the IFN-beta promoter. The polypeptide is Protein UL20 homolog (39) (Homo sapiens (Human)).